Reading from the N-terminus, the 50-residue chain is Penaeidin-1 (50 aa).

Disulfide bonds link Cys25/Cys38, Cys27/Cys45, and Cys39/Cys46.

Higher expression in hemocytes and to a lesser extent in heart, testis, gills, intestine, lymphoid organ and hepatopancreas. Traces in eyes and subcuticular epithelium. Not present in the brain.

It is found in the cytoplasmic granule. Functionally, antibacterial activity against M.luteus and E.coli bacteria. Antifungal activity against N.crassa and F.oxysporum. Presents chitin-binding activity. The polypeptide is Penaeidin-1 (Penaeus vannamei (Whiteleg shrimp)).